The chain runs to 196 residues: Adenylyl-sulfate kinase (196 aa).

Residue 31 to 38 (GLSGAGKS) participates in ATP binding. Ser105 (phosphoserine intermediate) is an active-site residue.

It belongs to the APS kinase family.

The catalysed reaction is adenosine 5'-phosphosulfate + ATP = 3'-phosphoadenylyl sulfate + ADP + H(+). The protein operates within sulfur metabolism; hydrogen sulfide biosynthesis; sulfite from sulfate: step 2/3. Catalyzes the synthesis of activated sulfate. This is Adenylyl-sulfate kinase (cysC) from Pseudomonas aeruginosa (strain ATCC 15692 / DSM 22644 / CIP 104116 / JCM 14847 / LMG 12228 / 1C / PRS 101 / PAO1).